Consider the following 392-residue polypeptide: Na(+)/H(+) antiporter NhaA (392 aa).

Helical transmembrane passes span 16 to 36 (ILLIIVTVLALILQNSFLSAA), 58 to 78 (LLLWVNDGLMAIFFFLIGLEV), 93 to 113 (ITLPGIAAVGGMIVPALIFIL), 124 to 144 (GWAIPTATDIAFALGILSLLG), 153 to 173 (IFLMALSIIDDLGAIVIIALF), 176 to 196 (TDLSTLSITVAAISLAILFIM), 199 to 219 (MDVAIKSAYIVIGIILWVSVL), 257 to 277 (DLHYWVAFLILPLFAFVNAGV), 295 to 315 (VMLGLFVGKQAGVFGFSWLAI), 328 to 348 (WMMLYGVSVLTGIGFTMSLFV), and 362 to 382 (ADKLAILLGSFLSAATGYLIL).

This sequence belongs to the NhaA Na(+)/H(+) (TC 2.A.33) antiporter family.

The protein localises to the cell inner membrane. It carries out the reaction Na(+)(in) + 2 H(+)(out) = Na(+)(out) + 2 H(+)(in). In terms of biological role, na(+)/H(+) antiporter that extrudes sodium in exchange for external protons. The protein is Na(+)/H(+) antiporter NhaA of Sulfurovum sp. (strain NBC37-1).